The following is a 622-amino-acid chain: Probable Xaa-Pro aminopeptidase P (622 aa).

4 residues coordinate Mn(2+): aspartate 419, aspartate 430, glutamate 528, and glutamate 542.

This sequence belongs to the peptidase M24B family. Mn(2+) is required as a cofactor.

The catalysed reaction is Release of any N-terminal amino acid, including proline, that is linked to proline, even from a dipeptide or tripeptide.. In terms of biological role, catalyzes the removal of a penultimate prolyl residue from the N-termini of peptides. This is Probable Xaa-Pro aminopeptidase P (AMPP) from Coprinopsis cinerea (strain Okayama-7 / 130 / ATCC MYA-4618 / FGSC 9003) (Inky cap fungus).